A 270-amino-acid polypeptide reads, in one-letter code: NAD kinase (270 aa).

The Proton acceptor role is filled by D57. NAD(+) is bound by residues 57-58 (DG), 125-126 (NE), R150, and N227.

The protein belongs to the NAD kinase family. The cofactor is a divalent metal cation.

The protein resides in the cytoplasm. It catalyses the reaction NAD(+) + ATP = ADP + NADP(+) + H(+). Its function is as follows. Involved in the regulation of the intracellular balance of NAD and NADP, and is a key enzyme in the biosynthesis of NADP. Catalyzes specifically the phosphorylation on 2'-hydroxyl of the adenosine moiety of NAD to yield NADP. The chain is NAD kinase from Ureaplasma parvum serovar 3 (strain ATCC 700970).